Reading from the N-terminus, the 238-residue chain is Enoyl-CoA delta isomerase 3 (238 aa).

Belongs to the enoyl-CoA hydratase/isomerase family.

Its subcellular location is the cytoplasm. The protein localises to the nucleus. It catalyses the reaction a (3Z)-enoyl-CoA = a 4-saturated (2E)-enoyl-CoA. It carries out the reaction a (3E)-enoyl-CoA = a 4-saturated (2E)-enoyl-CoA. It functions in the pathway lipid metabolism; fatty acid beta-oxidation. Its function is as follows. Able to isomerize both 3-cis and 3-trans double bonds into the 2-trans form in a range of enoyl-CoA species. Essential for the beta oxidation of unsaturated fatty acids. This is Enoyl-CoA delta isomerase 3 from Arabidopsis thaliana (Mouse-ear cress).